Reading from the N-terminus, the 303-residue chain is MSVIFFACVVRVRDGLPLSASTDFYHTQDFLEWRRRLKSLALRLAQYPGRGSAEGCDFSIHFSSFGDVACMAICSCQCPAAMAFCFLETLWWEFTASYDTTCIGLASRPYAFLEFDSIIQKVKWHFNYVSSSQMECSLEKIQEELKLQPPAVLTLEDTDVANGVMNGHTPMHLEPAPNFRMEPVTALGILSLILNIMCAALNLIRGVHLAEHSLQVAHEEIGNILAFLVPFVACIFQCYLYLFYSPARTMKVVLMLLFICLGNMYLHGLRNLWQILFHIGVAFLSSYQILTRQLQEKQSDCGV.

Over 1-183 (MSVIFFACVV…EPAPNFRMEP (183 aa)) the chain is Cytoplasmic. Positions 8–119 (CVVRVRDGLP…YAFLEFDSII (112 aa)) constitute a Longin domain. Residues 184–204 (VTALGILSLILNIMCAALNLI) form a helical membrane-spanning segment. Over 205–223 (RGVHLAEHSLQVAHEEIGN) the chain is Lumenal. A helical transmembrane segment spans residues 224-244 (ILAFLVPFVACIFQCYLYLFY). Residues 245–248 (SPAR) are Cytoplasmic-facing. The helical transmembrane segment at 249–269 (TMKVVLMLLFICLGNMYLHGL) threads the bilayer. Position 270 (arginine 270) is a topological domain, lumenal. A helical transmembrane segment spans residues 271–291 (NLWQILFHIGVAFLSSYQILT). Over 292 to 303 (RQLQEKQSDCGV) the chain is Cytoplasmic.

It belongs to the synaptobrevin family. Ubiquitously expressed.

It is found in the endoplasmic reticulum membrane. May be involved in vesicle transport between the ER and the Golgi complex. The chain is Vesicle-trafficking protein SEC22c (SEC22C) from Homo sapiens (Human).